Reading from the N-terminus, the 92-residue chain is Large ribosomal subunit protein eL43 (92 aa).

Cys-39, Cys-42, Cys-57, and Cys-60 together coordinate Zn(2+). The C4-type zinc finger occupies 39-60 (CPNCGEDRVDRQGTGIWQCSYC).

This sequence belongs to the eukaryotic ribosomal protein eL43 family. Putative zinc-binding subfamily. Part of the 50S ribosomal subunit. Contacts protein L2. It depends on Zn(2+) as a cofactor.

Functionally, binds to the 23S rRNA. The sequence is that of Large ribosomal subunit protein eL43 from Haloarcula marismortui (strain ATCC 43049 / DSM 3752 / JCM 8966 / VKM B-1809) (Halobacterium marismortui).